We begin with the raw amino-acid sequence, 343 residues long: tRNA N6-adenosine threonylcarbamoyltransferase (343 aa).

Fe cation contacts are provided by histidine 111 and histidine 115. Substrate is bound by residues 134 to 138 (LVSGG), aspartate 167, glycine 180, and asparagine 276. Aspartate 304 contacts Fe cation.

It belongs to the KAE1 / TsaD family. Requires Fe(2+) as cofactor.

The protein localises to the cytoplasm. The catalysed reaction is L-threonylcarbamoyladenylate + adenosine(37) in tRNA = N(6)-L-threonylcarbamoyladenosine(37) in tRNA + AMP + H(+). Required for the formation of a threonylcarbamoyl group on adenosine at position 37 (t(6)A37) in tRNAs that read codons beginning with adenine. Is involved in the transfer of the threonylcarbamoyl moiety of threonylcarbamoyl-AMP (TC-AMP) to the N6 group of A37, together with TsaE and TsaB. TsaD likely plays a direct catalytic role in this reaction. The chain is tRNA N6-adenosine threonylcarbamoyltransferase from Hahella chejuensis (strain KCTC 2396).